A 177-amino-acid polypeptide reads, in one-letter code: Ribosome maturation factor RimM (177 aa).

The 80-residue stretch at 98 to 177 (DDGYYWKDLM…TIEVDWDPGF (80 aa)) folds into the PRC barrel domain.

This sequence belongs to the RimM family. As to quaternary structure, binds ribosomal protein uS19.

Its subcellular location is the cytoplasm. An accessory protein needed during the final step in the assembly of 30S ribosomal subunit, possibly for assembly of the head region. Essential for efficient processing of 16S rRNA. May be needed both before and after RbfA during the maturation of 16S rRNA. It has affinity for free ribosomal 30S subunits but not for 70S ribosomes. The polypeptide is Ribosome maturation factor RimM (Enterobacter sp. (strain 638)).